The following is a 120-amino-acid chain: C-C motif chemokine 23 (120 aa).

Positions 1–21 (MKVSVAALSCLMLVTALGSQA) are cleaved as a signal peptide. Intrachain disulfides connect C54–C78, C55–C94, and C65–C105.

It belongs to the intercrine beta (chemokine CC) family. Post-translationally, the N-terminal is proteolytically cleaved by proteases associated with inflammatory responses. The processed forms, CCL23(19-99), CCL23(22-99), CCL23(27-99) and CCL23(30-99) exhibit increase in CCR1-mediated signaling and chemotaxis assays in vitro. High levels in adult lung, liver, skeletal muscle and pancreas. Moderate levels in fetal liver, adult bone marrow and placenta. The short form is the major species and the longer form was detected only in very low abundance. CCL23(19-99), CCL23(22-99), CCL23(27-99), CCL23(30-99) are found in high levels in synovial fluids from rheumatoid patients.

The protein localises to the secreted. Functionally, shows chemotactic activity for monocytes, resting T-lymphocytes, and neutrophils, but not for activated lymphocytes. Inhibits proliferation of myeloid progenitor cells in colony formation assays. This protein can bind heparin. Binds CCR1. CCL23(19-99), CCL23(22-99), CCL23(27-99), CCL23(30-99) are more potent chemoattractants than CCL23. The chain is C-C motif chemokine 23 (CCL23) from Homo sapiens (Human).